We begin with the raw amino-acid sequence, 137 residues long: Large ribosomal subunit protein eL28 (137 aa).

The residue at position 2 (Ser2) is an N-acetylserine. Glycyl lysine isopeptide (Lys-Gly) (interchain with G-Cter in SUMO2) cross-links involve residues Lys58 and Lys65. A Phosphoserine modification is found at Ser115.

This sequence belongs to the eukaryotic ribosomal protein eL28 family. As to quaternary structure, component of the large ribosomal subunit.

Its subcellular location is the cytoplasm. Its function is as follows. Component of the large ribosomal subunit. The ribosome is a large ribonucleoprotein complex responsible for the synthesis of proteins in the cell. In Homo sapiens (Human), this protein is Large ribosomal subunit protein eL28 (RPL28).